The following is a 343-amino-acid chain: Probable transcription factor MYB58 (343 aa).

Positions M1–R30 are disordered. Gly residues predominate over residues R15 to E27. 2 HTH myb-type domains span residues G26–L78 and R79–A134. 2 DNA-binding regions (H-T-H motif) span residues W54–K77 and W107–Q130. Disordered regions lie at residues L137–F169, P219–L238, and D307–L343. Residues P157–F169 show a composition bias toward polar residues. Residues Q320–S336 are compositionally biased toward pro residues.

Its subcellular location is the nucleus. Probable transcription factor. The protein is Probable transcription factor MYB58 of Oryza sativa subsp. japonica (Rice).